Consider the following 288-residue polypeptide: Transmembrane protein 163 (288 aa).

Over residues 1-11 the composition is skewed to basic and acidic residues; the sequence is MERAPGSERRS. Residues 1–64 are disordered; the sequence is MERAPGSERR…ESGQFSDGFE (64 aa). The Cytoplasmic portion of the chain corresponds to 1-87; that stretch reads MERAPGSERR…HEAQNYRKKA (87 aa). Ser-11 bears the Phosphoserine mark. Positions 12–24 are enriched in pro residues; the sequence is PPGPGVPRPPPRG. Over residues 25 to 42 the composition is skewed to low complexity; sequence HAPSTAAPAPNPAPLSSS. The segment at 41 to 71 is required for interaction with MCOLN1; that stretch reads SSMQPDEERQPRISESGQFSDGFEDRGLLES. Ser-54, Ser-56, and Ser-60 each carry phosphoserine. The helical transmembrane segment at 88–108 threads the bilayer; that stretch reads LWVSWLSIIVTLALAVAAFTV. Residues 109-115 are Extracellular-facing; the sequence is SVMRYSA. Residues 116-136 traverse the membrane as a helical segment; the sequence is SAFGFAFDAILDVLSSAIVLW. Topologically, residues 137–149 are cytoplasmic; it reads RYSNAAAVHSAHR. A helical membrane pass occupies residues 150–170; it reads EYIACVILGVIFLLSSICIVV. At 171–186 the chain is on the extracellular side; the sequence is KAIHDLSTRLLPEVDD. A helical membrane pass occupies residues 187–207; the sequence is FLFSVSILSGILCSVLAVLKF. Residues 208–216 are Cytoplasmic-facing; sequence MLGKVLTSR. Residues 217 to 237 form a helical membrane-spanning segment; the sequence is ALITDGFNSLVGGVMGFSILL. Residues 238–254 are Extracellular-facing; sequence SAEVFKHNAAVWYLDGS. A helical membrane pass occupies residues 255-275; that stretch reads IGVLIGLTIFAYGVKLLIDMV. The Cytoplasmic segment spans residues 276-288; the sequence is PRVRQTRHYEMFE.

This sequence belongs to the TMEM163 family. Homodimer. Interacts with MCOLN1. Interacts with SLC30A1, SLC30A2, SLC30A3 and SLC30A4. Strongly expressed in brain. Also detected in lung, liver, kidney and spleen. Mainly expressed in the glutaminergic neuron subpopulations.

The protein resides in the cytoplasmic vesicle. The protein localises to the secretory vesicle. Its subcellular location is the synaptic vesicle membrane. It localises to the early endosome membrane. It is found in the late endosome membrane. The protein resides in the lysosome membrane. The protein localises to the cell membrane. It carries out the reaction Zn(2+)(in) = Zn(2+)(out). In terms of biological role, zinc ion transporter that mediates zinc efflux and plays a crucial role in intracellular zinc homeostasis. Binds the divalent cations Zn(2+), Ni(2+), and to a minor extent Cu(2+). Is a functional modulator of P2X purinoceptors, including P2RX1, P2RX3, P2RX4 and P2RX7. Plays a role in central nervous system development and is required for myelination, and survival and proliferation of oligodendrocytes. This chain is Transmembrane protein 163 (Tmem163), found in Rattus norvegicus (Rat).